The primary structure comprises 62 residues: Large ribosomal subunit protein uL29 (62 aa).

Belongs to the universal ribosomal protein uL29 family.

The protein is Large ribosomal subunit protein uL29 of Geobacter sp. (strain M21).